Consider the following 197-residue polypeptide: dTTP/UTP pyrophosphatase (197 aa).

Residue Asp70 is the Proton acceptor of the active site.

It belongs to the Maf family. YhdE subfamily. A divalent metal cation is required as a cofactor.

The protein localises to the cytoplasm. It catalyses the reaction dTTP + H2O = dTMP + diphosphate + H(+). The enzyme catalyses UTP + H2O = UMP + diphosphate + H(+). In terms of biological role, nucleoside triphosphate pyrophosphatase that hydrolyzes dTTP and UTP. May have a dual role in cell division arrest and in preventing the incorporation of modified nucleotides into cellular nucleic acids. The protein is dTTP/UTP pyrophosphatase (yhdE) of Escherichia coli O157:H7.